The primary structure comprises 288 residues: CUF1-dependent copper transporter 1 (288 aa).

Residue Asn18 is glycosylated (N-linked (GlcNAc...) asparagine). A helical transmembrane segment spans residues 42 to 62 (MPSSAGATVGVCIGLFILAIF). Disordered stretches follow at residues 106–125 (PVLF…YNPL) and 154–180 (RESQ…GSGV). Polar residues predominate over residues 158 to 167 (EGSSAPSYAH). Low complexity predominate over residues 168–177 (SQQGQAQAQG). The chain crosses the membrane as a helical span at residues 251-271 (LLMLVVMTFNIWWMISVVIGC).

Belongs to the copper transporter (Ctr) (TC 1.A.56) family. SLC31A subfamily. As to quaternary structure, interacts with the copper acquisition factor BIM1.

The protein localises to the cell membrane. High affinity copper transporter involved in Cu(+) import into the cell upon copper-limitating conditions. Functions with BIM1 and probably also FRE4 and FRE7, where FRE4 and FRE7 metalloreductases liberate the Cu(2+) bound to the BIM1 copper-binding site for subsequent import of Cu(+) into the cell by CTR1, via the reduction of BIM1-bound Cu(2+) to Cu(+) to reduce binding affinity for BIM1 but increase affinity for CTR1. The BIM1-CTR1 pathway for copper uptake plays a key role in colonization in the brain where copper amounts are low and thus in cryptococcal meningitis. This chain is CUF1-dependent copper transporter 1, found in Cryptococcus neoformans var. grubii serotype A (strain H99 / ATCC 208821 / CBS 10515 / FGSC 9487) (Filobasidiella neoformans var. grubii).